Here is a 212-residue protein sequence, read N- to C-terminus: MQEYNNQDYKQPLRIGVGGPVGSGKTALLEILCKTIRDKYQIAVVTNDIYTQEDAKILTRAQALDADRIIGVETGGCPHTAIREDASMNLAAVEELAKRHKNLDLVFVESGGDNLSATFSPELADLTIYVIDVAEGEKIPRKGGPGITRSDLLVINKIDLAPYVGASLDVMEADTARMRPEKPYVFTNLKEGIGLQKIIDFIVDKGMLPKVD.

19–26 (GPVGSGKT) is a binding site for GTP.

It belongs to the SIMIBI class G3E GTPase family. UreG subfamily. Homodimer. UreD, UreF and UreG form a complex that acts as a GTP-hydrolysis-dependent molecular chaperone, activating the urease apoprotein by helping to assemble the nickel containing metallocenter of UreC. The UreE protein probably delivers the nickel.

The protein resides in the cytoplasm. Functionally, facilitates the functional incorporation of the urease nickel metallocenter. This process requires GTP hydrolysis, probably effectuated by UreG. In Vibrio parahaemolyticus, this protein is Urease accessory protein UreG.